Here is a 106-residue protein sequence, read N- to C-terminus: MKYLAAYLLASLSGNANAASVTKILQSVGVEVDAARVESVCKELDGKDVQALIAAGKSKVGSVAAAAAPAAATSAAPAAAAAAPAKKVVEEKKEESDDDMGMGLFD.

The tract at residues 80–106 is disordered; that stretch reads AAAAPAKKVVEEKKEESDDDMGMGLFD.

It belongs to the eukaryotic ribosomal protein P1/P2 family. As to quaternary structure, P1 and P2 exist as dimers at the large ribosomal subunit. Phosphorylated.

In terms of biological role, plays an important role in the elongation step of protein synthesis. This Dictyostelium discoideum (Social amoeba) protein is Large ribosomal subunit protein P2 (rplp2).